We begin with the raw amino-acid sequence, 213 residues long: Ribosomal RNA small subunit methyltransferase G (213 aa).

S-adenosyl-L-methionine contacts are provided by residues glycine 83, leucine 88, 132 to 133 (IE), and arginine 146.

Belongs to the methyltransferase superfamily. RNA methyltransferase RsmG family.

It is found in the cytoplasm. The catalysed reaction is guanosine(527) in 16S rRNA + S-adenosyl-L-methionine = N(7)-methylguanosine(527) in 16S rRNA + S-adenosyl-L-homocysteine. Its function is as follows. Specifically methylates the N7 position of guanine in position 527 of 16S rRNA. This Granulibacter bethesdensis (strain ATCC BAA-1260 / CGDNIH1) protein is Ribosomal RNA small subunit methyltransferase G.